The following is a 484-amino-acid chain: Probable cobyric acid synthase (484 aa).

Residues 247–433 (ELHIQIVKLP…LHGIFHNFAF (187 aa)) form the GATase cobBQ-type domain. Residue Cys325 is the Nucleophile of the active site. His425 is an active-site residue.

Belongs to the CobB/CobQ family. CobQ subfamily.

It functions in the pathway cofactor biosynthesis; adenosylcobalamin biosynthesis. Catalyzes amidations at positions B, D, E, and G on adenosylcobyrinic A,C-diamide. NH(2) groups are provided by glutamine, and one molecule of ATP is hydrogenolyzed for each amidation. In Thermococcus onnurineus (strain NA1), this protein is Probable cobyric acid synthase.